A 176-amino-acid polypeptide reads, in one-letter code: MIDPGTVGAALETAVFGLLALVTVFFAIFVVIAKDVVRAGLALIMCMFGVAGLYILLNAQFLGVIQVLVYIGAIGVLILFAVMLTKREIGGGPVQINRPLAFLVCLLFVAVVVTGAFGTSWNTVSELPENPADPSNIEGIGMLIFTHFVAPFEVLSIVLLASLIGAIYMAKGEGNR.

5 helical membrane-spanning segments follow: residues 13 to 33 (TAVF…VVIA), 39 to 59 (AGLA…LLNA), 64 to 84 (VIQV…AVML), 99 to 119 (PLAF…AFGT), and 140 to 160 (IGML…IVLL).

The protein belongs to the complex I subunit 6 family. As to quaternary structure, the FPO complex is composed of at least 13 different subunits. FpoA, FpoH, FpoJ, FpoK, FpoL, FpoM and FpoN proteins constitute the membrane sector of the complex.

It is found in the cell membrane. The catalysed reaction is methanophenazine + reduced coenzyme F420-(gamma-L-Glu)(n) = dihydromethanophenazine + oxidized coenzyme F420-(gamma-L-Glu)(n) + H(+). In terms of biological role, component of the F(420)H(2) dehydrogenase (FPO complex) which is part of the energy-conserving F(420)H(2):heterodisulfide oxidoreductase system. The membrane-bound electron transfer system of the complex plays an important role in the metabolism of methylotrophic methanogens when the organisms grow on methanol or methylamines. Catalyzes the oxidation of methanophenazine to dihydromethanophenazine. It shuttles electrons from F(420)H(2), via FAD and iron-sulfur (Fe-S) centers, to methanophenazine (an electron carrier in the membrane). It couples the redox reaction to proton translocation (for every two electrons transferred, two hydrogen ions are translocated across the cytoplasmic membrane), and thus conserves the redox energy in a proton gradient. It also catalyzes the oxidation of F(420)H(2) with quinones such as 2,3-dimethyl-1,4-naphthoquinone, 2-methyl-1,4-naphthoquinone and tetramethyl-p-benzoquinone. In Methanosarcina mazei (strain ATCC BAA-159 / DSM 3647 / Goe1 / Go1 / JCM 11833 / OCM 88) (Methanosarcina frisia), this protein is F(420)H(2) dehydrogenase subunit J (fpoJ).